Here is a 92-residue protein sequence, read N- to C-terminus: DNA/RNA-binding protein Alba (92 aa).

K11 carries the N6-acetyllysine modification.

Belongs to the histone-like Alba family. In terms of processing, acetylated. Acetylation at Lys-11 decreases DNA-binding affinity.

It localises to the cytoplasm. The protein localises to the chromosome. Functionally, binds double-stranded DNA tightly but without sequence specificity. Involved in DNA compaction. This is DNA/RNA-binding protein Alba from Pyrobaculum aerophilum (strain ATCC 51768 / DSM 7523 / JCM 9630 / CIP 104966 / NBRC 100827 / IM2).